The chain runs to 552 residues: 5'-AMP-activated protein kinase catalytic subunit alpha-2 (552 aa).

In terms of domain architecture, Protein kinase spans 16 to 268 (YVLGDTLGVG…IKDIREHEWF (253 aa)). Residues 22 to 30 (LGVGTFGKV) and Lys-45 each bind ATP. Asp-139 acts as the Proton acceptor in catalysis. At Thr-172 the chain carries Phosphothreonine; by LKB1 and CaMKK2. At Thr-258 the chain carries Phosphothreonine. The tract at residues 291–376 (EAVKEVCEKF…PERMPPLIAD (86 aa)) is AIS. Residue Ser-377 is modified to Phosphoserine. Positions 477-521 (VEQRSGSSTPQRSCSAAGLHRPRSSFDSTTAESHSLSGSLTGSLT) are disordered. Positions 480–490 (RSGSSTPQRSC) are enriched in polar residues. At Ser-491 the chain carries Phosphoserine. The segment covering 501 to 510 (SFDSTTAESH) has biased composition (polar residues). Positions 511–521 (SLSGSLTGSLT) are enriched in low complexity.

Belongs to the protein kinase superfamily. CAMK Ser/Thr protein kinase family. SNF1 subfamily. AMPK is a heterotrimer of an alpha catalytic subunit (PRKAA1 or PRKAA2), a beta (PRKAB1 or PRKAB2) and a gamma non-catalytic subunits (PRKAG1, PRKAG2 or PRKAG3). Interacts with FNIP1 and FNIP2. Interacts with DUSP29. Interacts with ARF6. The phosphorylated form at Thr-172 mediated by CamKK2 interacts with ACSS2. Mg(2+) is required as a cofactor. In terms of processing, ubiquitinated. Phosphorylated at Thr-172 by STK11/LKB1 in complex with STE20-related adapter-alpha (STRADA) pseudo kinase and CAB39. Also phosphorylated at Thr-172 by CAMKK2; triggered by a rise in intracellular calcium ions, without detectable changes in the AMP/ATP ratio. CAMKK1 can also phosphorylate Thr-172, but at much lower level. Dephosphorylated by protein phosphatase 2A and 2C (PP2A and PP2C). Phosphorylated by ULK1; leading to negatively regulate AMPK activity and suggesting the existence of a regulatory feedback loop between ULK1 and AMPK. Dephosphorylated by PPM1A and PPM1B at Thr-172 (mediated by STK11/LKB1).

The protein resides in the cytoplasm. It is found in the nucleus. It carries out the reaction L-seryl-[protein] + ATP = O-phospho-L-seryl-[protein] + ADP + H(+). The catalysed reaction is L-threonyl-[protein] + ATP = O-phospho-L-threonyl-[protein] + ADP + H(+). The enzyme catalyses L-seryl-[acetyl-CoA carboxylase] + ATP = O-phospho-L-seryl-[acetyl-CoA carboxylase] + ADP + H(+). It catalyses the reaction L-seryl-[3-hydroxy-3-methylglutaryl-coenzyme A reductase] + ATP = O-phospho-L-seryl-[3-hydroxy-3-methylglutaryl-coenzyme A reductase] + ADP + H(+). Its activity is regulated as follows. Activated by phosphorylation on Thr-172. Binding of AMP to non-catalytic gamma subunit (PRKAG1, PRKAG2 or PRKAG3) results in allosteric activation, inducing phosphorylation on Thr-172. AMP-binding to gamma subunit also sustains activity by preventing dephosphorylation of Thr-172. ADP also stimulates Thr-172 phosphorylation, without stimulating already phosphorylated AMPK. ATP promotes dephosphorylation of Thr-172, rendering the enzyme inactive. Under physiological conditions AMPK mainly exists in its inactive form in complex with ATP, which is much more abundant than AMP. Selectively inhibited by compound C (6-[4-(2-Piperidin-1-yl-ethoxy)-phenyl)]-3-pyridin-4-yl-pyyrazolo[1,5-a] pyrimidine. Activated by resveratrol, a natural polyphenol present in red wine, and S17834, a synthetic polyphenol. Salicylate/aspirin directly activates kinase activity, primarily by inhibiting Thr-172 dephosphorylation. Its function is as follows. Catalytic subunit of AMP-activated protein kinase (AMPK), an energy sensor protein kinase that plays a key role in regulating cellular energy metabolism. In response to reduction of intracellular ATP levels, AMPK activates energy-producing pathways and inhibits energy-consuming processes: inhibits protein, carbohydrate and lipid biosynthesis, as well as cell growth and proliferation. AMPK acts via direct phosphorylation of metabolic enzymes, and by longer-term effects via phosphorylation of transcription regulators. Regulates lipid synthesis by phosphorylating and inactivating lipid metabolic enzymes such as ACACA, ACACB, GYS1, HMGCR and LIPE; regulates fatty acid and cholesterol synthesis by phosphorylating acetyl-CoA carboxylase (ACACA and ACACB) and hormone-sensitive lipase (LIPE) enzymes, respectively. Promotes lipolysis of lipid droplets by mediating phosphorylation of isoform 1 of CHKA (CHKalpha2). Regulates insulin-signaling and glycolysis by phosphorylating IRS1, PFKFB2 and PFKFB3. Involved in insulin receptor/INSR internalization. AMPK stimulates glucose uptake in muscle by increasing the translocation of the glucose transporter SLC2A4/GLUT4 to the plasma membrane, possibly by mediating phosphorylation of TBC1D4/AS160. Regulates transcription and chromatin structure by phosphorylating transcription regulators involved in energy metabolism such as CRTC2/TORC2, FOXO3, histone H2B, HDAC5, MEF2C, MLXIPL/ChREBP, EP300, HNF4A, p53/TP53, SREBF1, SREBF2 and PPARGC1A. Acts as a key regulator of glucose homeostasis in liver by phosphorylating CRTC2/TORC2, leading to CRTC2/TORC2 sequestration in the cytoplasm. In response to stress, phosphorylates 'Ser-36' of histone H2B (H2BS36ph), leading to promote transcription. Acts as a key regulator of cell growth and proliferation by phosphorylating FNIP1, TSC2, RPTOR, WDR24 and ATG1/ULK1: in response to nutrient limitation, negatively regulates the mTORC1 complex by phosphorylating RPTOR component of the mTORC1 complex and by phosphorylating and activating TSC2. Also phosphorylates and inhibits GATOR2 subunit WDR24 in response to nutrient limitation, leading to suppress glucose-mediated mTORC1 activation. In response to energetic stress, phosphorylates FNIP1, inactivating the non-canonical mTORC1 signaling, thereby promoting nuclear translocation of TFEB and TFE3, and inducing transcription of lysosomal or autophagy genes. In response to nutrient limitation, promotes autophagy by phosphorylating and activating ATG1/ULK1. In that process also activates WDR45/WIPI4. Phosphorylates CASP6, thereby preventing its autoprocessing and subsequent activation. AMPK also acts as a regulator of circadian rhythm by mediating phosphorylation of CRY1, leading to destabilize it. May regulate the Wnt signaling pathway by phosphorylating CTNNB1, leading to stabilize it. Also acts as a regulator of cellular polarity by remodeling the actin cytoskeleton; probably by indirectly activating myosin. Also phosphorylates CFTR, EEF2K, KLC1, NOS3 and SLC12A1. Plays an important role in the differential regulation of pro-autophagy (composed of PIK3C3, BECN1, PIK3R4 and UVRAG or ATG14) and non-autophagy (composed of PIK3C3, BECN1 and PIK3R4) complexes, in response to glucose starvation. Can inhibit the non-autophagy complex by phosphorylating PIK3C3 and can activate the pro-autophagy complex by phosphorylating BECN1. Upon glucose starvation, promotes ARF6 activation in a kinase-independent manner leading to cell migration. Upon glucose deprivation mediates the phosphorylation of ACSS2 at 'Ser-659', which exposes the nuclear localization signal of ACSS2, required for its interaction with KPNA1 and nuclear translocation. Upon stress, regulates mitochondrial fragmentation through phosphorylation of MTFR1L. This is 5'-AMP-activated protein kinase catalytic subunit alpha-2 (PRKAA2) from Pongo abelii (Sumatran orangutan).